A 385-amino-acid polypeptide reads, in one-letter code: 1-deoxy-D-xylulose 5-phosphate reductoisomerase (385 aa).

Thr10, Gly11, Ser12, Ile13, and Asn124 together coordinate NADPH. Lys125 contacts 1-deoxy-D-xylulose 5-phosphate. Glu126 provides a ligand contact to NADPH. Asp150 provides a ligand contact to Mn(2+). Positions 151, 152, 176, and 199 each coordinate 1-deoxy-D-xylulose 5-phosphate. Residue Glu152 participates in Mn(2+) binding. Residue Gly205 coordinates NADPH. 4 residues coordinate 1-deoxy-D-xylulose 5-phosphate: Ser212, Asn217, Lys218, and Glu221. Position 221 (Glu221) interacts with Mn(2+).

This sequence belongs to the DXR family. Mg(2+) serves as cofactor. The cofactor is Mn(2+).

The catalysed reaction is 2-C-methyl-D-erythritol 4-phosphate + NADP(+) = 1-deoxy-D-xylulose 5-phosphate + NADPH + H(+). It participates in isoprenoid biosynthesis; isopentenyl diphosphate biosynthesis via DXP pathway; isopentenyl diphosphate from 1-deoxy-D-xylulose 5-phosphate: step 1/6. Functionally, catalyzes the NADPH-dependent rearrangement and reduction of 1-deoxy-D-xylulose-5-phosphate (DXP) to 2-C-methyl-D-erythritol 4-phosphate (MEP). The polypeptide is 1-deoxy-D-xylulose 5-phosphate reductoisomerase (Clostridium kluyveri (strain NBRC 12016)).